The primary structure comprises 197 residues: Putative NADH dehydrogenase/NAD(P)H nitroreductase Lcho_1290 (197 aa).

The protein belongs to the nitroreductase family. HadB/RutE subfamily. FMN serves as cofactor.

The chain is Putative NADH dehydrogenase/NAD(P)H nitroreductase Lcho_1290 from Leptothrix cholodnii (strain ATCC 51168 / LMG 8142 / SP-6) (Leptothrix discophora (strain SP-6)).